The following is a 268-amino-acid chain: Imidazole glycerol phosphate synthase subunit HisF (268 aa).

Catalysis depends on residues aspartate 12 and aspartate 131.

The protein belongs to the HisA/HisF family. In terms of assembly, heterodimer of HisH and HisF.

It localises to the cytoplasm. It catalyses the reaction 5-[(5-phospho-1-deoxy-D-ribulos-1-ylimino)methylamino]-1-(5-phospho-beta-D-ribosyl)imidazole-4-carboxamide + L-glutamine = D-erythro-1-(imidazol-4-yl)glycerol 3-phosphate + 5-amino-1-(5-phospho-beta-D-ribosyl)imidazole-4-carboxamide + L-glutamate + H(+). It functions in the pathway amino-acid biosynthesis; L-histidine biosynthesis; L-histidine from 5-phospho-alpha-D-ribose 1-diphosphate: step 5/9. Its function is as follows. IGPS catalyzes the conversion of PRFAR and glutamine to IGP, AICAR and glutamate. The HisF subunit catalyzes the cyclization activity that produces IGP and AICAR from PRFAR using the ammonia provided by the HisH subunit. This chain is Imidazole glycerol phosphate synthase subunit HisF, found in Methanosphaerula palustris (strain ATCC BAA-1556 / DSM 19958 / E1-9c).